Consider the following 499-residue polypeptide: Probable cytosol aminopeptidase (499 aa).

Positions 269 and 274 each coordinate Mn(2+). Residue lysine 281 is part of the active site. Residues aspartate 292, aspartate 351, and glutamate 353 each coordinate Mn(2+). Arginine 355 is an active-site residue.

It belongs to the peptidase M17 family. The cofactor is Mn(2+).

The protein localises to the cytoplasm. It carries out the reaction Release of an N-terminal amino acid, Xaa-|-Yaa-, in which Xaa is preferably Leu, but may be other amino acids including Pro although not Arg or Lys, and Yaa may be Pro. Amino acid amides and methyl esters are also readily hydrolyzed, but rates on arylamides are exceedingly low.. The enzyme catalyses Release of an N-terminal amino acid, preferentially leucine, but not glutamic or aspartic acids.. Presumably involved in the processing and regular turnover of intracellular proteins. Catalyzes the removal of unsubstituted N-terminal amino acids from various peptides. The chain is Probable cytosol aminopeptidase from Actinobacillus pleuropneumoniae serotype 3 (strain JL03).